The following is a 164-amino-acid chain: uncharacterized protein (164 aa).

2 helical membrane-spanning segments follow: residues 11–31 and 51–71; these read FYVN…PSLL and CQQY…LVLV.

The protein resides in the membrane. This is an uncharacterized protein from Saccharomyces cerevisiae (strain ATCC 204508 / S288c) (Baker's yeast).